A 132-amino-acid chain; its full sequence is ATP synthase epsilon chain (132 aa).

This sequence belongs to the ATPase epsilon chain family. In terms of assembly, F-type ATPases have 2 components, CF(1) - the catalytic core - and CF(0) - the membrane proton channel. CF(1) has five subunits: alpha(3), beta(3), gamma(1), delta(1), epsilon(1). CF(0) has three main subunits: a, b and c.

The protein resides in the cell inner membrane. Produces ATP from ADP in the presence of a proton gradient across the membrane. The polypeptide is ATP synthase epsilon chain (Cereibacter sphaeroides (strain ATCC 17025 / ATH 2.4.3) (Rhodobacter sphaeroides)).